The primary structure comprises 1277 residues: Myosin-1 (1277 aa).

Over residues 1–13 the composition is skewed to basic residues; that stretch reads MAPSKKAGKKVTP. A disordered region spans residues 1-27; that stretch reads MAPSKKAGKKVTPKKAAGNNAKSKVAK. Residues 39–718 enclose the Myosin motor domain; the sequence is VGVTDMTLLT…TLFALETMRD (680 aa). Position 132–139 (132–139) interacts with ATP; that stretch reads GESGAGKT. Phosphoserine is present on Ser-360. The interval 407 to 489 is actin-binding; it reads IIGILDIFGF…PGIFAALNDA (83 aa). The segment at 567 to 587 is disordered; that stretch reads LFPDRPDPNSKKRPPTASDRI. 2 IQ domains span residues 722-742 and 743-768; these read HNMA…KHEC and ARRI…YGHQ. The TH1 domain maps to 776-965; the sequence is RRRFSLLSYR…TVHVPSGEPA (190 aa). Disordered regions lie at residues 952-1072 and 1129-1259; these read YKSH…AEPE and PKAA…GPGQ. The span at 1015–1056 shows a compositional bias: low complexity; that stretch reads PAVATPSVVSTPAAAAVVSKPKPAASTPAAVRAPAVTPAARS. Over residues 1057–1068 the composition is skewed to pro residues; the sequence is VPPPPPPPPPAR. The region spanning 1071–1129 is the SH3 domain; sequence PEKEMYRAKFDFQGQEGEMSLTKDDEVELIEKDENGWWLVKKDGVEAWAPYNYLERIAP. The segment covering 1132–1142 has biased composition (pro residues); it reads APAPPPPPARP. Composition is skewed to polar residues over residues 1145–1159 and 1185–1197; these read TSTV…TTAD and AATT…SSRP. Residues 1204–1224 are compositionally biased toward pro residues; it reads VPPPVAAKPKPPVVAPKPGVP. Over residues 1226–1240 the composition is skewed to low complexity; sequence PGGKPALPTTARPAP. A compositionally biased stretch (gly residues) spans 1241 to 1258; sequence SGGGAAAGRLGGGGGGPG.

Belongs to the TRAFAC class myosin-kinesin ATPase superfamily. Myosin family. Phosphorylation of the TEDS site (Ser-360) is required for the polarization of the actin cytoskeleton. Phosphorylation probably activates the myosin-I ATPase activity.

It localises to the cytoplasm. The protein resides in the cytoskeleton. It is found in the actin patch. Functionally, type-I myosin implicated in the organization of the actin cytoskeleton. Required for proper actin cytoskeleton polarization. At the cell cortex, assembles in patch-like structures together with proteins from the actin-polymerizing machinery and promotes actin assembly. Functions as actin nucleation-promoting factor (NPF) for the Arp2/3 complex. This Coprinopsis cinerea (strain Okayama-7 / 130 / ATCC MYA-4618 / FGSC 9003) (Inky cap fungus) protein is Myosin-1 (MYO1).